Here is a 268-residue protein sequence, read N- to C-terminus: MEDFFNCLRSRGFERTDEPLPSDSRRIVVHGVGGSGKTSLIEAFAIANEWVRAYTLTSHERFDISGRGISQYKGQPIDEKLWTILDEYGQTDNPETLPPFNVLATDPYQAFRCQPLRAHFVSLRSYRVPHHIAQAITQYTGFPIEAAGTDLHEGKYTVGPWTDKLRQQILVEDGEIHYQLSRRQCPHKLITDAIGEQWPTVTVVFDRSISPESARPLRCLFYIAATRSSNELNIRTYVPTRTPGLIKASLPHTSCRLCCRPRDLPSEN.

The (+)RNA virus helicase ATP-binding domain occupies 1–138; that stretch reads MEDFFNCLRS…PHHIAQAITQ (138 aa). The region spanning 139-268 is the (+)RNA virus helicase C-terminal domain; the sequence is YTGFPIEAAG…CRPRDLPSEN (130 aa).

Belongs to the Tymovirales TGBp1 protein family. As to quaternary structure, homodimer and homooligomer. Interacts with capsid protein. Interacts with host AGO1; this interaction targets the host protein for degradation, thereby suppressing the antiviral RNA silencing.

It is found in the host cytoplasm. Its function is as follows. Transports viral genome to neighboring plant cells directly through plasmosdesmata, without any budding. The movement protein allows efficient cell to cell propagation, by bypassing the host cell wall barrier. Increases plasmodesma size exclusion limit. Acts as a suppressor of RNA-mediated gene silencing, also known as post-transcriptional gene silencing (PTGS), a mechanism of plant viral defense that limits the accumulation of viral RNAs. The polypeptide is Movement and silencing protein TGBp1 (ORF2) (Lolium latent virus (isolate Lolium/USA/US1/-) (LoLV)).